The sequence spans 393 residues: Acetate kinase (393 aa).

Position 10 (asparagine 10) interacts with Mg(2+). An ATP-binding site is contributed by lysine 17. Arginine 89 serves as a coordination point for substrate. Residue aspartate 146 is the Proton donor/acceptor of the active site. ATP contacts are provided by residues 204-208, 278-280, and 323-327; these read HLGNG, DMR, and GVGEN. Residue glutamate 376 participates in Mg(2+) binding.

This sequence belongs to the acetokinase family. In terms of assembly, homodimer. Mg(2+) serves as cofactor. The cofactor is Mn(2+).

The protein resides in the cytoplasm. It carries out the reaction acetate + ATP = acetyl phosphate + ADP. The protein operates within metabolic intermediate biosynthesis; acetyl-CoA biosynthesis; acetyl-CoA from acetate: step 1/2. In terms of biological role, catalyzes the formation of acetyl phosphate from acetate and ATP. Can also catalyze the reverse reaction. In Mycoplasma genitalium (strain ATCC 33530 / DSM 19775 / NCTC 10195 / G37) (Mycoplasmoides genitalium), this protein is Acetate kinase.